The following is a 343-amino-acid chain: MMEVEGSMNRAPDQSSFLRSRRSKALYQFKQQKLPACKPVLTPISVITVFMLMGFVFIPIGLITLRASRDAIEIIDRYDVECIPEEYRTNKLLYITDSSIPKNCTRYLKVQKYMKAPIFIYYQLDNYYQNHRRYVKSRSDQQLLHGLEYSHTSSCEPEESSNGLPIVPCGLIAWSMFNDTFTFSRERTKLNVSRNNIAWKSDREHKFGKNVYPINFQNGTLIGGAKLDPKIPLSDQEDFIVWMRAAALLSFRKLYGRIEEDLEPGKVVEVNLMNNYNTYSFSGQKKLILSTSNWLGGRNDFLGITYLVVGSSSIVISIIFMLLHLKNPRPYGDNSWNKKSLSS.

Residues 43–63 (PISVITVFMLMGFVFIPIGLI) form a helical membrane-spanning segment. Residues asparagine 103, asparagine 178, asparagine 191, and asparagine 218 are each glycosylated (N-linked (GlcNAc...) asparagine). The helical transmembrane segment at 301 to 321 (FLGITYLVVGSSSIVISIIFM) threads the bilayer.

The protein belongs to the CDC50/LEM3 family. As to expression, expressed in roots, leaves, stems, flowers and siliques.

The protein localises to the membrane. This chain is Putative ALA-interacting subunit 2 (ALIS2), found in Arabidopsis thaliana (Mouse-ear cress).